The primary structure comprises 203 residues: Ras-like protein family member 10A (203 aa).

Positions 1 to 203 (MGGSLRVAVL…ALHPARCSLM (203 aa)) are small GTPase-like. 11–18 (GAPGVGKT) is a binding site for GTP. Residues 33 to 42 (HRPTDSPCLY) carry the Effector region motif. GTP-binding positions include 59–62 (DGDV) and 129–132 (NKRD). C200 carries the cysteine methyl ester modification. C200 carries S-farnesyl cysteine lipidation. Positions 201–203 (SLM) are cleaved as a propeptide — removed in mature form.

Belongs to the small GTPase superfamily. Ras family. In terms of processing, isoprenylation is essential for nucleolar localization, and the proliferation-inhibiting activity of RASL10A.

It localises to the cell membrane. The protein localises to the nucleus. The protein resides in the nucleolus. The catalysed reaction is GTP + H2O = GDP + phosphate + H(+). Its function is as follows. Potent inhibitor of cellular proliferation. In Mus musculus (Mouse), this protein is Ras-like protein family member 10A (Rasl10a).